The primary structure comprises 152 residues: uncharacterized protein (152 aa).

The next 3 helical transmembrane spans lie at 15–35 (IINVFVSFGFNLILGILIYDI), 43–63 (LVVACILIAMPIIAFLILILT), and 117–137 (TFLLLLIAFLAFGLIFTKLLI).

This sequence to M.jannaschii MJ0129 and MJ0587.

It is found in the cell membrane. This is an uncharacterized protein from Methanocaldococcus jannaschii (strain ATCC 43067 / DSM 2661 / JAL-1 / JCM 10045 / NBRC 100440) (Methanococcus jannaschii).